Reading from the N-terminus, the 104-residue chain is uncharacterized protein (104 aa).

2 helical membrane-spanning segments follow: residues leucine 16–tyrosine 36 and glycine 44–isoleucine 64.

The protein localises to the cell membrane. This is an uncharacterized protein from Bacillus anthracis.